A 520-amino-acid polypeptide reads, in one-letter code: Glycosyl hydrolase family 109 protein 5 (520 aa).

The signal sequence occupies residues 1 to 27; it reads MRTFKSLMISLCMGTTLCMCLPQTTTA. Residues 77-78, Asp99, 147-150, 167-168, and Asn196 each bind NAD(+); these read MR, WLHH, and EV. Substrate contacts are provided by residues Tyr225, Arg248, 260–263, and Tyr338; that span reads YATH. An NAD(+)-binding site is contributed by Tyr260.

It belongs to the Gfo/Idh/MocA family. Glycosyl hydrolase 109 subfamily. Requires NAD(+) as cofactor.

In terms of biological role, glycosidase. In Phocaeicola vulgatus (strain ATCC 8482 / DSM 1447 / JCM 5826 / CCUG 4940 / NBRC 14291 / NCTC 11154) (Bacteroides vulgatus), this protein is Glycosyl hydrolase family 109 protein 5.